Reading from the N-terminus, the 67-residue chain is MKTKNFRDMTDEELLKEIDGFKTELFNLRFQLATGQLDNPARIREVRKGIARGKTILRERELKINRA.

Belongs to the universal ribosomal protein uL29 family.

In Desulfitobacterium hafniense (strain DSM 10664 / DCB-2), this protein is Large ribosomal subunit protein uL29.